The chain runs to 364 residues: uncharacterized protein (364 aa).

This is an uncharacterized protein from Escherichia coli (strain K12).